A 548-amino-acid chain; its full sequence is Methyl-accepting chemotaxis protein HlyB (548 aa).

The Cytoplasmic portion of the chain corresponds to 1-10 (MIINKFSLKW). A helical transmembrane segment spans residues 11–31 (MLAIAVAIPAIALLFVAFTSL). Residues 32-199 (NTMSVMQAQS…SFEAGRTKQM (168 aa)) lie on the Periplasmic side of the membrane. Residues 200–220 (VIIAAGLIISFITSLVIITNL) form a helical membrane-spanning segment. An HAMP domain is found at 218 to 271 (TNLRSRVAYLKDRMSSAAANLSLRTRLELDGNDELCDIGKSFNAFIDKVHHSIE). The Cytoplasmic portion of the chain corresponds to 221–548 (RSRVAYLKDR…LDKLVGSFEL (328 aa)). One can recognise a Methyl-accepting transducer domain in the interval 276 to 512 (NSKELATMAS…DINRNVEDIN (237 aa)).

It belongs to the methyl-accepting chemotaxis (MCP) protein family.

The protein localises to the cell inner membrane. Functionally, chemotactic-signal transducers respond to changes in the concentration of attractants and repellents in the environment, transduce a signal from the outside to the inside of the cell, and facilitate sensory adaptation through the variation of the level of methylation. The polypeptide is Methyl-accepting chemotaxis protein HlyB (hlyB) (Vibrio cholerae serotype O1 (strain ATCC 39315 / El Tor Inaba N16961)).